Here is a 390-residue protein sequence, read N- to C-terminus: Protein dom34 (390 aa).

Belongs to the eukaryotic release factor 1 family. Pelota subfamily. As to quaternary structure, component of the Dom34-Hbs1 complex, also named Pelota-HBS1L complex, composed of dom34 and hbs1. It depends on a divalent metal cation as a cofactor.

It localises to the cytoplasm. Component of the Dom34-Hbs1 complex, a complex that recognizes stalled ribosomes and triggers the No-Go Decay (NGD) pathway. In the Dom34-Hbs1 complex, dom34 recognizes ribosomes stalled at the 3' end of an mRNA and engages stalled ribosomes by destabilizing mRNA in the mRNA channel. Following ribosome-binding, the Dom34-Hbs1 complex promotes the disassembly of stalled ribosomes, followed by degradation of damaged mRNAs as part of the NGD pathway. The protein is Protein dom34 of Schizosaccharomyces pombe (strain 972 / ATCC 24843) (Fission yeast).